A 353-amino-acid polypeptide reads, in one-letter code: B1 bradykinin receptor (353 aa).

Residues 1–40 (MASSWPPLELQSSNQSQLFPQNATACDNAPEAWDLLHRVL) lie on the Extracellular side of the membrane. 2 N-linked (GlcNAc...) asparagine glycosylation sites follow: Asn14 and Asn22. The helical transmembrane segment at 41 to 64 (PTFIISICFFGLLGNLFVLLVFLL) threads the bilayer. Topologically, residues 65–73 (PRRQLNVAE) are cytoplasmic. Residues 74–98 (IYLANLAASDLVFVLGLPFWAENIW) form a helical membrane-spanning segment. Topologically, residues 99-111 (NQFNWPFGALLCR) are extracellular. A disulfide bridge connects residues Cys110 and Cys189. The chain crosses the membrane as a helical span at residues 112-133 (VINGVIKANLFISIFLVVAISQ). At 134–155 (DRYRVLVHPMASRRQQRRRQAR) the chain is on the cytoplasmic side. The chain crosses the membrane as a helical span at residues 156 to 178 (VTCVLIWVVGGLLSIPTFLLRSI). At 179–199 (QAVPDLNITACILLLPHEAWH) the chain is on the extracellular side. N-linked (GlcNAc...) asparagine glycosylation is present at Asn185. Residues 200–226 (FARIVELNILGFLLPLAAIVFFNYHIL) form a helical membrane-spanning segment. Topologically, residues 227-247 (ASLRTREEVSRTRCGGRKDSK) are cytoplasmic. Residues 248-272 (TTALILTLVVAFLVCWAPYHFFAFL) traverse the membrane as a helical segment. Residues 273 to 291 (EFLFQVQAVRGCFWEDFID) are Extracellular-facing. A helical transmembrane segment spans residues 292–314 (LGLQLANFFAFTNSSLNPVIYVF). Residues 315–353 (VGRLFRTKVWELYKQCTPKSLAPISSSHRKEIFQLFWRN) are Cytoplasmic-facing. Cys330 carries the S-palmitoyl cysteine lipid modification.

Belongs to the G-protein coupled receptor 1 family. Bradykinin receptor subfamily. BDKRB1 sub-subfamily.

The protein resides in the cell membrane. Functionally, this is a receptor for bradykinin. Could be a factor in chronic pain and inflammation. This Homo sapiens (Human) protein is B1 bradykinin receptor (BDKRB1).